The sequence spans 183 residues: Putative 3-methyladenine DNA glycosylase (183 aa).

The protein belongs to the DNA glycosylase MPG family.

The sequence is that of Putative 3-methyladenine DNA glycosylase from Legionella pneumophila subsp. pneumophila (strain Philadelphia 1 / ATCC 33152 / DSM 7513).